Reading from the N-terminus, the 333-residue chain is MRNTRYGFLVLLSSLLMLTGCSRRDILDDYPVSGVDIKLDWDGVTDQLPEGVRVIFYPKNGDGRKVDKYLSVRGGEMKVPPGRYSVVVYNYNTESIRIRGEESYETIEAYTGNCNGLGIEGTEKMVWSPDSLYVLNIDELKIEKSEEVLRLDWKLESVVKKYSFAVEAKGLEYVATVVGSIDGLSDCYCIGKGRGVCSSQPIYFEVKKGDNKVTAFFTAFKQVKEMTMPTRMSTSERETSSEKGAIILILKFIKTDNTVQEATIDVTEIIGTLENAGTGEDGKPTPPPEIELPPDDKIEVDKPETPPNPDGGGGMGGNVDGWGPEDNVELPVN.

The first 20 residues, 1 to 20, serve as a signal peptide directing secretion; the sequence is MRNTRYGFLVLLSSLLMLTG. Cys-21 is lipidated: N-palmitoyl cysteine. Cys-21 carries S-diacylglycerol cysteine lipidation. The tract at residues 274-333 is disordered; that stretch reads ENAGTGEDGKPTPPPEIELPPDDKIEVDKPETPPNPDGGGGMGGNVDGWGPEDNVELPVN. Basic and acidic residues predominate over residues 294-304; that stretch reads PDDKIEVDKPE. Over residues 310–320 the composition is skewed to gly residues; sequence DGGGGMGGNVD.

Belongs to the bacteroidetes fimbrillin superfamily. FimB/Mfa2 family.

The protein resides in the cell outer membrane. In terms of biological role, putative fimbrium anchoring subunit. The sequence is that of Putative fimbrium anchoring subunit Fim4B from Bacteroides ovatus (strain ATCC 8483 / DSM 1896 / JCM 5824 / BCRC 10623 / CCUG 4943 / NCTC 11153).